The following is a 121-amino-acid chain: Large ribosomal subunit protein uL14c (121 aa).

This sequence belongs to the universal ribosomal protein uL14 family. As to quaternary structure, part of the 50S ribosomal subunit.

It is found in the plastid. The protein localises to the organellar chromatophore. Its function is as follows. Binds to 23S rRNA. The sequence is that of Large ribosomal subunit protein uL14c from Paulinella chromatophora.